A 540-amino-acid polypeptide reads, in one-letter code: Kinesin light chain (540 aa).

The stretch at 34-138 forms a coiled coil; the sequence is LETSVKGVKE…NKHLKYMASI (105 aa). TPR repeat units lie at residues 206 to 239, 248 to 281, 290 to 323, 332 to 365, 374 to 407, and 456 to 489; these read LRTLHNLVIQYASQGRYEVAVPLCKQALEDLEKT, ATMLNILALVYRDQNKYKEAANLLNEALSIREKC, AATLNNLAVLFGKRGKFKDAEPLCKRALEIREKV, AKQLNNLALLCQNQGKYEEVEKYYKRALEIYESK, AKTKNNLSSAYLKQGKYKEAEELYKQILTRAHER, and TTTLKNLGALYRRQGKYEAAETLEDVALRAKKQH.

The protein belongs to the kinesin light chain family. In terms of assembly, oligomeric complex composed of two heavy chains and two light chains. Interacts with unc-83; the interaction is direct. Interacts with unc-33; the interaction regulates unc-33 neurite localization. Interacts with casy-1.

It localises to the cytoplasm. It is found in the cytoskeleton. The protein localises to the nucleus envelope. In terms of biological role, kinesin is a microtubule-associated force-producing protein that may play a role in organelle transport. The light chain may function in coupling of cargo to the heavy chain or in the modulation of its ATPase activity. Recruits unc-83 (within the unc-83-unc-84 LINC complex) to the nuclear envelope during nuclear migration to mediate the link between the nuclear envelope and the microtubule cytoskeleton in hypodermal precursor cells. The chain is Kinesin light chain from Caenorhabditis elegans.